Reading from the N-terminus, the 624-residue chain is Kelch-like ECH-associated protein 1 (624 aa).

Residue C38 is modified to S-(2-succinyl)cysteine. The BTB domain occupies 77–149 (CDVTLQVKYE…AYTASISVGE (73 aa)). R135 participates in a covalent cross-link: N5-[4-(S-L-cysteinyl)-5-methyl-1H-imidazol-2-yl]-L-ornithine (Arg-Cys) (interchain with C-151 in KEAP1). Residue C151 is modified to S-(2,3-dicarboxypropyl)cysteine; alternate. The residue at position 151 (C151) is an S-(2-succinyl)cysteine; alternate. At C151 the chain carries S-nitrosocysteine; alternate. C151 participates in a covalent cross-link: N5-[4-(S-L-cysteinyl)-5-methyl-1H-imidazol-2-yl]-L-ornithine (Cys-Arg) (interchain with R-135 in KEAP1). Residues 184 to 286 (AIGIANFAEQ…TPRFLQTQLQ (103 aa)) form the BACK domain. C241 is modified (S-(2-succinyl)cysteine). 2 positions are modified to S-(2,3-dicarboxypropyl)cysteine: C257 and C273. Position 288 is an S-(2,3-dicarboxypropyl)cysteine; alternate (C288). C288 is modified (S-(2-succinyl)cysteine; alternate). C319 carries the post-translational modification S-(2-succinyl)cysteine. Kelch repeat units lie at residues 327–372 (LIYT…VVGG), 373–423 (LLYA…VIDG), 424–470 (HIYA…VLNR), 471–517 (LLYA…VLHN), 519–564 (IYAA…VHQG), and 565–611 (KIYV…VTME). Residue C434 is modified to S-cGMP-cysteine. At C613 the chain carries S-(2-succinyl)cysteine.

Belongs to the KEAP1 family. In terms of assembly, component of the BCR(KEAP1) E3 ubiquitin ligase complex, at least composed of 2 molecules of CUL3, 2 molecules of KEAP1, and RBX1. Interacts with NFE2L2/NRF2; the interaction is direct. Forms a ternary complex with NFE2L2/NRF2 and PGAM5. Interacts with (phosphorylated) SQSTM1/p62; the interaction is direct and inactivates the BCR(KEAP1) complex by sequestering it in inclusion bodies, promoting its degradation. Interacts with NFE2L1. Interacts with BPTF and PTMA. Interacts with MAP1LC3B. Interacts indirectly with ENC1. Interacts with SESN1 and SESN2. Interacts with HSP90AA1 and HSP90AB1. Interacts with PGCKA1; this interaction prevents the ubiquitination of KEAP1 by TRIM25, thus protecting KEAP1 from degradation. In terms of processing, non-enzymatic covalent modifications of reactive cysteines by electrophile metabolites inactivate the BCR(KEAP1) complex. Accumulation of fumarate promotes the formation of cysteine S-succination (S-(2-succinyl)cysteine), leading to inactivate the BCR(KEAP1) complex and promote NFE2L2/NRF2 nuclear accumulation and activation. Nitric oxide-dependent 8-Nitro-cGMP formation promotes cysteine guanylation (S-cGMP-cysteine), leading to NFE2L2/NRF2 nuclear accumulation and activation. Itaconate, an anti-inflammatory metabolite generated in response to lipopolysaccharide, alkylates cysteines, activating NFE2L2/NRF2. Methylglyoxal, a reactive metabolite that accumulates when the glycolytic enzyme PGK1 is inhibited, promotes formation of a methylimidazole cross-link between proximal Cys-151 and Arg-135 on another KEAP1 molecule, resulting in an inactive dimer that inactivates the BCR(KEAP1) complex. Post-translationally, degraded via a proteasomal-independent process during selective autophagy: interaction with phosphorylated SQSTM1/p62 sequesters KEAP1 in inclusion bodies, leading to its degradation. Auto-ubiquitinated by the BCR(KEAP1) complex. Quinone-induced oxidative stress, but not sulforaphane, increases its ubiquitination. Ubiquitination and subsequent degradation is most pronounced following prolonged exposure of cells to oxidative stress, particularly in glutathione-deficient cells that are highly susceptible to oxidative stress. Deubiquitinated by USP25; leading to stabilization. Ubiquitinated by TRIM25; leading to degradation upon ER stress.

The protein localises to the cytoplasm. It is found in the nucleus. It participates in protein modification; protein ubiquitination. With respect to regulation, ubiquitin ligase activity of the BCR(KEAP1) complex is inhibited by oxidative stress and electrophile metabolites such as sulforaphane. Electrophile metabolites react with reactive cysteine residues in KEAP1 and trigger non-enzymatic covalent modifications of these cysteine residues, leading to inactivate the ubiquitin ligase activity of the BCR(KEAP1) complex. Selective autophagy also inactivates the BCR(KEAP1) complex via interaction between KEAP1 and SQSTM1/p62, which sequesters the complex in inclusion bodies and promotes its degradation. Functionally, substrate-specific adapter of a BCR (BTB-CUL3-RBX1) E3 ubiquitin ligase complex that regulates the response to oxidative stress by targeting NFE2L2/NRF2 for ubiquitination. KEAP1 acts as a key sensor of oxidative and electrophilic stress: in normal conditions, the BCR(KEAP1) complex mediates ubiquitination and degradation of NFE2L2/NRF2, a transcription factor regulating expression of many cytoprotective genes. In response to oxidative stress, different electrophile metabolites trigger non-enzymatic covalent modifications of highly reactive cysteine residues in KEAP1, leading to inactivate the ubiquitin ligase activity of the BCR(KEAP1) complex, promoting NFE2L2/NRF2 nuclear accumulation and expression of phase II detoxifying enzymes. In response to selective autophagy, KEAP1 is sequestered in inclusion bodies following its interaction with SQSTM1/p62, leading to inactivation of the BCR(KEAP1) complex and activation of NFE2L2/NRF2. The BCR(KEAP1) complex also mediates ubiquitination of SQSTM1/p62, increasing SQSTM1/p62 sequestering activity and degradation. The BCR(KEAP1) complex also targets BPTF and PGAM5 for ubiquitination and degradation by the proteasome. In Mus musculus (Mouse), this protein is Kelch-like ECH-associated protein 1.